The following is a 296-amino-acid chain: ATP synthase gamma chain (296 aa).

It belongs to the ATPase gamma chain family. F-type ATPases have 2 components, CF(1) - the catalytic core - and CF(0) - the membrane proton channel. CF(1) has five subunits: alpha(3), beta(3), gamma(1), delta(1), epsilon(1). CF(0) has three main subunits: a, b and c.

The protein localises to the cell inner membrane. Produces ATP from ADP in the presence of a proton gradient across the membrane. The gamma chain is believed to be important in regulating ATPase activity and the flow of protons through the CF(0) complex. In Methylorubrum extorquens (strain PA1) (Methylobacterium extorquens), this protein is ATP synthase gamma chain.